A 939-amino-acid chain; its full sequence is Protein translocase subunit SecA (939 aa).

Residues Gln-85, 103-107, and Asp-504 contribute to the ATP site; that span reads GEGKT. Positions 850–939 are disordered; the sequence is PVQDGAERPS…KGGGGRRRKK (90 aa). A compositionally biased stretch (basic and acidic residues) spans 854–864; sequence GAERPSLEKEG. Residues 924–939 show a composition bias toward basic residues; the sequence is ERRKAQKGGGGRRRKK.

It belongs to the SecA family. As to quaternary structure, monomer and homodimer. Part of the essential Sec protein translocation apparatus which comprises SecA, SecYEG and auxiliary proteins SecDF. Other proteins may also be involved.

Its subcellular location is the cell membrane. The protein resides in the cytoplasm. It carries out the reaction ATP + H2O + cellular proteinSide 1 = ADP + phosphate + cellular proteinSide 2.. Its function is as follows. Part of the Sec protein translocase complex. Interacts with the SecYEG preprotein conducting channel. Has a central role in coupling the hydrolysis of ATP to the transfer of proteins into and across the cell membrane, serving as an ATP-driven molecular motor driving the stepwise translocation of polypeptide chains across the membrane. The protein is Protein translocase subunit SecA of Streptomyces griseus subsp. griseus (strain JCM 4626 / CBS 651.72 / NBRC 13350 / KCC S-0626 / ISP 5235).